The primary structure comprises 54 residues: Ovomucoid (54 aa).

Positions 4-54 (VDCSEYPKPVCSPEYMPLCGSDSKTYNNKCDFCSAVVESNGTLTLGHFGKC) constitute a Kazal-like domain. 3 disulfides stabilise this stretch: Cys6–Cys36, Cys14–Cys33, and Cys22–Cys54. The N-linked (GlcNAc...) asparagine glycan is linked to Asn43.

It localises to the secreted. This Casuarius casuarius (Southern cassowary) protein is Ovomucoid.